The primary structure comprises 507 residues: MSLQWLQQTRHELSWTWILLTTCIALISPLVLKGIYNVYFHPLRNIPGPKLAALTDFYAFYWNWIRDEGYSKQFSRLHEQYNSPIIRIGPNNVHTTQVEFYDVIFKSGSKWLKDKSFYKYFNGLDAMIEPYQYRTYRTHLAPLYAQRAIDGLAPKLRSDLTNSASGMMRQTKNGQTVNMAKVLRTLSTSMILHNLFSLDISLNDGDEYHPFLEAFEQLMTQSWLFVTYPMVPMVLSLIPGTSFARFNSSYTTFSNYCTAWNDEDMRKQRESEEQSTRDSHTKRYLSLKDDDARKKTAIPYPLDDVFNFVAGGSDTTAYTTACAFYHILSSPTVRENLVVELDEHSSIIRDEFDYNKIQNLPYLNAVIKETLRISVPVPGSLPRIVPQGGITIGSFSLPAGTGVSITQQAISFNEKIFPLPHSFLPERWIGPKSVGLDKWNIAFSRGPRQCIGTTLAYLELRCVIAYFFSRFDMALTGNCGDQLRWVDRFVAVNLDDVELQILADRWT.

Residues 15–35 form a helical membrane-spanning segment; the sequence is WTWILLTTCIALISPLVLKGI. The N-linked (GlcNAc...) asparagine glycan is linked to asparagine 247. Position 450 (cysteine 450) interacts with heme.

It belongs to the cytochrome P450 family. Heme serves as cofactor.

Its subcellular location is the membrane. It functions in the pathway alkaloid biosynthesis; ergot alkaloid biosynthesis. In terms of biological role, cytochrome P450 monooxygenase; part of the gene cluster that mediates the biosynthesis of fungal ergot alkaloid. DmaW catalyzes the first step of ergot alkaloid biosynthesis by condensing dimethylallyl diphosphate (DMAP) and tryptophan to form 4-dimethylallyl-L-tryptophan. The second step is catalyzed by the methyltransferase easF that methylates 4-dimethylallyl-L-tryptophan in the presence of S-adenosyl-L-methionine, resulting in the formation of 4-dimethylallyl-L-abrine. The catalase easC and the FAD-dependent oxidoreductase easE then transform 4-dimethylallyl-L-abrine to chanoclavine-I which is further oxidized by easD in the presence of NAD(+), resulting in the formation of chanoclavine-I aldehyde. Agroclavine dehydrogenase easG then mediates the conversion of chanoclavine-I aldehyde to agroclavine via a non-enzymatic adduct reaction: the substrate is an iminium intermediate that is formed spontaneously from chanoclavine-I aldehyde in the presence of glutathione. The presence of easA is not required to complete this reaction. Further conversion of agroclavine to paspalic acid is a two-step process involving oxidation of agroclavine to elymoclavine and of elymoclavine to paspalic acid, the second step being performed by the elymoclavine oxidase cloA. Paspalic acid is then further converted to D-lysergic acid. Ergopeptines are assembled from D-lysergic acid and three different amino acids by the D-lysergyl-peptide-synthetases composed each of a monomudular and a trimodular nonribosomal peptide synthetase subunit. LpsB and lpsC encode the monomodular subunits responsible for D-lysergic acid activation and incorporation into the ergopeptine backbone. LpsA1 and A2 subunits encode the trimodular nonribosomal peptide synthetase assembling the tripeptide portion of ergopeptines. LpsA1 is responsible for formation of the major ergopeptine, ergotamine, and lpsA2 for alpha-ergocryptine, the minor ergopeptine of the total alkaloid mixture elaborated by C.purpurea. D-lysergyl-tripeptides are assembled by the nonribosomal peptide synthetases and released as N-(D-lysergyl-aminoacyl)-lactams. Cyclolization of the D-lysergyl-tripeptides is performed by the Fe(2+)/2-ketoglutarate-dependent dioxygenase easH which introduces a hydroxyl group into N-(D-lysergyl-aminoacyl)-lactam at alpha-C of the aminoacyl residue followed by spontaneous condensation with the terminal lactam carbonyl group. This is Cytochrome P450 monooxygenase cloA from Claviceps purpurea (strain 20.1) (Ergot fungus).